A 323-amino-acid polypeptide reads, in one-letter code: Queuosine 5'-phosphate N-glycosylase/hydrolase (323 aa).

Queuosine 5'-phosphate contacts are provided by N72, Y93, K199, F229, D231, D298, W302, and Q306. D231 functions as the Nucleophile or transition state stabilizer in the catalytic mechanism.

This sequence belongs to the QNG1 protein family. As to quaternary structure, monomer.

The enzyme catalyses queuosine 5'-phosphate + H2O = queuine + D-ribose 5-phosphate. Its function is as follows. Catalyzes the hydrolysis of queuosine 5'-phosphate, releasing the nucleobase queuine (q). Is likely required for salvage of queuine from exogenous queuosine (Q) that is imported and then converted to queuosine 5'-phosphate intracellularly. In vitro, can also catalyze the release of the q base directly from Q as substrate; however, Q may not be the biologically relevant substrate. Shows a very low activity on queuosine 3',5'-diphosphate, and cannot release q from queuosine 3'-phosphate and from the 5'-nucleotides AMP, UMP, CMP or GMP, indicating specificity for the queuine base. In Sphaerobacter thermophilus (strain ATCC 49802 / DSM 20745 / KCCM 41009 / NCIMB 13125 / S 6022), this protein is Queuosine 5'-phosphate N-glycosylase/hydrolase.